Reading from the N-terminus, the 82-residue chain is Exodeoxyribonuclease 7 small subunit (82 aa).

It belongs to the XseB family. Heterooligomer composed of large and small subunits.

It localises to the cytoplasm. The enzyme catalyses Exonucleolytic cleavage in either 5'- to 3'- or 3'- to 5'-direction to yield nucleoside 5'-phosphates.. Bidirectionally degrades single-stranded DNA into large acid-insoluble oligonucleotides, which are then degraded further into small acid-soluble oligonucleotides. The chain is Exodeoxyribonuclease 7 small subunit from Pectobacterium carotovorum subsp. carotovorum (strain PC1).